The following is a 481-amino-acid chain: Arginine biosynthesis bifunctional protein ArgJ, chloroplastic (481 aa).

Residues Thr225, Lys251, Thr262, Glu349, Asn476, and Thr481 each coordinate substrate. Thr262 acts as the Nucleophile in catalysis.

This sequence belongs to the ArgJ family. Heterodimer of an alpha and a beta chain.

It localises to the plastid. The protein resides in the chloroplast. The catalysed reaction is N(2)-acetyl-L-ornithine + L-glutamate = N-acetyl-L-glutamate + L-ornithine. The enzyme catalyses L-glutamate + acetyl-CoA = N-acetyl-L-glutamate + CoA + H(+). Its pathway is amino-acid biosynthesis; L-arginine biosynthesis; L-ornithine and N-acetyl-L-glutamate from L-glutamate and N(2)-acetyl-L-ornithine (cyclic): step 1/1. It participates in amino-acid biosynthesis; L-arginine biosynthesis; N(2)-acetyl-L-ornithine from L-glutamate: step 1/4. Functionally, catalyzes two activities which are involved in the cyclic version of arginine biosynthesis: the synthesis of acetylglutamate from glutamate and acetyl-CoA, and of ornithine by transacetylation between acetylornithine and glutamate. This chain is Arginine biosynthesis bifunctional protein ArgJ, chloroplastic, found in Populus trichocarpa (Western balsam poplar).